Reading from the N-terminus, the 335-residue chain is HTH-type transcriptional regulator MalR (335 aa).

The region spanning 1-55 (MNIKDIARLSGVGVSTVSRVINNHPDVKQSTREKVLQIIKDSNYIPNNSARILKQ) is the HTH lacI-type domain. The H-T-H motif DNA-binding region spans 3 to 22 (IKDIARLSGVGVSTVSRVIN).

Repressor of glucanotransferase gene expression. This chain is HTH-type transcriptional regulator MalR, found in Clostridium butyricum.